Consider the following 122-residue polypeptide: Small ribosomal subunit protein uS13 (122 aa).

The interval 99–122 (RGQRTHTNARTRKGPAKAIAGKKK) is disordered.

It belongs to the universal ribosomal protein uS13 family. Part of the 30S ribosomal subunit. Forms a loose heterodimer with protein S19. Forms two bridges to the 50S subunit in the 70S ribosome.

Its function is as follows. Located at the top of the head of the 30S subunit, it contacts several helices of the 16S rRNA. In the 70S ribosome it contacts the 23S rRNA (bridge B1a) and protein L5 of the 50S subunit (bridge B1b), connecting the 2 subunits; these bridges are implicated in subunit movement. Contacts the tRNAs in the A and P-sites. The sequence is that of Small ribosomal subunit protein uS13 from Rhizobium leguminosarum bv. trifolii (strain WSM2304).